Reading from the N-terminus, the 95-residue chain is Integration host factor subunit beta (95 aa).

The tract at residues 56–95 (RAPRTGRNPKTGETVELDGKHVPHFKPGKELRDRVNESIA) is disordered. The segment covering 72 to 95 (LDGKHVPHFKPGKELRDRVNESIA) has biased composition (basic and acidic residues).

It belongs to the bacterial histone-like protein family. Heterodimer of an alpha and a beta chain.

Its function is as follows. This protein is one of the two subunits of integration host factor, a specific DNA-binding protein that functions in genetic recombination as well as in transcriptional and translational control. This Pseudoalteromonas translucida (strain TAC 125) protein is Integration host factor subunit beta.